The following is a 228-amino-acid chain: Cytidylate kinase (228 aa).

Glycine 12–threonine 20 is a binding site for ATP.

The protein belongs to the cytidylate kinase family. Type 1 subfamily.

The protein resides in the cytoplasm. It catalyses the reaction CMP + ATP = CDP + ADP. The catalysed reaction is dCMP + ATP = dCDP + ADP. The polypeptide is Cytidylate kinase (Photobacterium profundum (strain SS9)).